A 341-amino-acid polypeptide reads, in one-letter code: Methionine import ATP-binding protein MetN (341 aa).

An ABC transporter domain is found at I2–V241. G38–S45 contacts ATP.

The protein belongs to the ABC transporter superfamily. Methionine importer (TC 3.A.1.24) family. In terms of assembly, the complex is composed of two ATP-binding proteins (MetN), two transmembrane proteins (MetI) and a solute-binding protein (MetQ).

The protein localises to the cell membrane. The catalysed reaction is L-methionine(out) + ATP + H2O = L-methionine(in) + ADP + phosphate + H(+). The enzyme catalyses D-methionine(out) + ATP + H2O = D-methionine(in) + ADP + phosphate + H(+). In terms of biological role, part of the ABC transporter complex MetNIQ involved in methionine import. Responsible for energy coupling to the transport system. In Staphylococcus haemolyticus (strain JCSC1435), this protein is Methionine import ATP-binding protein MetN.